Here is a 598-residue protein sequence, read N- to C-terminus: Vacuolin-A (598 aa).

Residues isoleucine 482–glutamate 539 adopt a coiled-coil conformation.

This sequence belongs to the vacuolin family.

It is found in the endosome membrane. It localises to the lysosome. The protein is Vacuolin-A (vacA) of Dictyostelium discoideum (Social amoeba).